A 216-amino-acid chain; its full sequence is Peptide deformylase (216 aa).

Fe cation contacts are provided by Cys134 and His178. The active site involves Glu179. Fe cation is bound at residue His182.

This sequence belongs to the polypeptide deformylase family. Fe(2+) is required as a cofactor.

It carries out the reaction N-terminal N-formyl-L-methionyl-[peptide] + H2O = N-terminal L-methionyl-[peptide] + formate. In terms of biological role, removes the formyl group from the N-terminal Met of newly synthesized proteins. Requires at least a dipeptide for an efficient rate of reaction. N-terminal L-methionine is a prerequisite for activity but the enzyme has broad specificity at other positions. In Mycoplasma pneumoniae (strain ATCC 29342 / M129 / Subtype 1) (Mycoplasmoides pneumoniae), this protein is Peptide deformylase.